The following is a 447-amino-acid chain: Phospholipase A(1) DAD1, chloroplastic (447 aa).

The N-terminal 46 residues, 1 to 46, are a transit peptide targeting the chloroplast; the sequence is MRFSLSPVRPHSVVVPSLPKQDVVSYISGTTSNRQCRCVLTLPSPS. The GXSXG signature appears at 293–297; it reads GHSLG. The active-site Acyl-ester intermediate is Ser-295. Catalysis depends on charge relay system residues Asp-352 and His-418.

This sequence belongs to the AB hydrolase superfamily. Lipase family. In terms of tissue distribution, expressed in flower buds, but not in leaves or roots. Restricted to the stamen filaments immediately before flower opening.

The protein resides in the plastid. Its subcellular location is the chloroplast. It catalyses the reaction a 1,2-diacyl-sn-glycero-3-phosphocholine + H2O = a 2-acyl-sn-glycero-3-phosphocholine + a fatty acid + H(+). The enzyme catalyses 1-hexadecanoyl-2-(9Z,12Z-octadecadienoyl)-sn-glycero-3-phosphocholine + H2O = 2-(9Z,12Z-octadecadienoyl)-sn-glycero-3-phosphocholine + hexadecanoate + H(+). Sn-1-specific phospholipase that releases free fatty acids from phospholipids. Low activity on galactolipids and triacylglycerols. Catalyzes the initial step of jasmonic acid biosynthesis. Not essential for jasmonate biosynthesis after wounding or upon pathogen infection. This chain is Phospholipase A(1) DAD1, chloroplastic, found in Arabidopsis thaliana (Mouse-ear cress).